We begin with the raw amino-acid sequence, 451 residues long: MSQRSTKMGDTIAAIATASGAAGIGIIRLSGSLIKTIATGLGMTTLRPRYAHYTRFLDVQDEVIDDGLALWFPAPHSFTGEDVLELQGHGSPLLLRQLLTRCLDLGARQAHPGEFSERAFLNGKLDLIQAEAIADMIGAADLRAARAARRSLDGVFSRRCEALAQQLIRLRIHVEATIDFAEESLDTLDRAQIRTSLQTLNVELTQLLRDAEHGKRLCDGLYTVLVGPPNVGKSSLLNALIGSDRAIVTDVPGTTRDTLRESVHFHGLEFVLVDTAGLREEGDAIEREGMRRTLNELQRADLALVVLDACDPQIGSLALADALTSVPRVLWIHNKLDLLTEPPSALDTDVIPVSAMTGAGLETLKTRLRTLLLGETVETIEGEFSARLRHVQALQRTAAHVTDANAQFAYEHLELTAEELRLAYKALGEINGSMSPDELLGRIFSNFCIGK.

(6S)-5-formyl-5,6,7,8-tetrahydrofolate-binding residues include arginine 28, glutamate 85, and lysine 124. The region spanning 220–373 is the TrmE-type G domain; sequence GLYTVLVGPP…LKTRLRTLLL (154 aa). Residue asparagine 230 coordinates K(+). GTP-binding positions include 230–235, 249–255, and 274–277; these read NVGKSS, TDVPGTT, and DTAG. Residue serine 234 coordinates Mg(2+). K(+) is bound by residues threonine 249, valine 251, and threonine 254. Mg(2+) is bound at residue threonine 255. Residue lysine 451 participates in (6S)-5-formyl-5,6,7,8-tetrahydrofolate binding.

The protein belongs to the TRAFAC class TrmE-Era-EngA-EngB-Septin-like GTPase superfamily. TrmE GTPase family. As to quaternary structure, homodimer. Heterotetramer of two MnmE and two MnmG subunits. Requires K(+) as cofactor.

It localises to the cytoplasm. In terms of biological role, exhibits a very high intrinsic GTPase hydrolysis rate. Involved in the addition of a carboxymethylaminomethyl (cmnm) group at the wobble position (U34) of certain tRNAs, forming tRNA-cmnm(5)s(2)U34. This chain is tRNA modification GTPase MnmE, found in Xylella fastidiosa (strain 9a5c).